A 234-amino-acid chain; its full sequence is Ubiquinone biosynthesis O-methyltransferase (234 aa).

S-adenosyl-L-methionine contacts are provided by arginine 37, glycine 56, aspartate 77, and methionine 121.

This sequence belongs to the methyltransferase superfamily. UbiG/COQ3 family.

It carries out the reaction a 3-demethylubiquinol + S-adenosyl-L-methionine = a ubiquinol + S-adenosyl-L-homocysteine + H(+). It catalyses the reaction a 3-(all-trans-polyprenyl)benzene-1,2-diol + S-adenosyl-L-methionine = a 2-methoxy-6-(all-trans-polyprenyl)phenol + S-adenosyl-L-homocysteine + H(+). The protein operates within cofactor biosynthesis; ubiquinone biosynthesis. In terms of biological role, O-methyltransferase that catalyzes the 2 O-methylation steps in the ubiquinone biosynthetic pathway. The sequence is that of Ubiquinone biosynthesis O-methyltransferase from Aromatoleum aromaticum (strain DSM 19018 / LMG 30748 / EbN1) (Azoarcus sp. (strain EbN1)).